A 185-amino-acid chain; its full sequence is Ribosome-recycling factor (185 aa).

The protein belongs to the RRF family.

It localises to the cytoplasm. Its function is as follows. Responsible for the release of ribosomes from messenger RNA at the termination of protein biosynthesis. May increase the efficiency of translation by recycling ribosomes from one round of translation to another. This chain is Ribosome-recycling factor, found in Bacillus cereus (strain ATCC 10987 / NRS 248).